We begin with the raw amino-acid sequence, 461 residues long: V-type ATP synthase beta chain 1 (461 aa).

Belongs to the ATPase alpha/beta chains family.

In terms of biological role, produces ATP from ADP in the presence of a proton gradient across the membrane. The V-type beta chain is a regulatory subunit. This Clostridium tetani (strain Massachusetts / E88) protein is V-type ATP synthase beta chain 1.